Here is a 306-residue protein sequence, read N- to C-terminus: Glutaminase (306 aa).

Substrate-binding residues include Ser-66, Asn-116, Glu-159, Asn-166, Tyr-190, Tyr-242, and Val-260.

The protein belongs to the glutaminase family. In terms of assembly, homotetramer.

It carries out the reaction L-glutamine + H2O = L-glutamate + NH4(+). In Caulobacter vibrioides (strain ATCC 19089 / CIP 103742 / CB 15) (Caulobacter crescentus), this protein is Glutaminase.